The following is a 752-amino-acid chain: Photosystem I P700 chlorophyll a apoprotein A1 (752 aa).

8 helical membrane passes run 73 to 96 (IFSA…FHGA), 159 to 182 (LYWI…FHYH), 198 to 222 (MNHH…HVAL), 294 to 312 (IAHH…GHMY), 349 to 372 (WHAQ…HHMY), 388 to 414 (LSLF…IFMV), 436 to 458 (SIIA…FYIH), and 533 to 551 (FMVH…LILL). Cysteine 575 and cysteine 584 together coordinate [4Fe-4S] cluster. A run of 2 helical transmembrane segments spans residues 591 to 612 (HVFL…HFSW) and 666 to 688 (ASAY…MFLF). Chlorophyll a' is bound at residue histidine 677. Residues methionine 685 and tyrosine 693 each coordinate chlorophyll a. Tryptophan 694 contributes to the phylloquinone binding site. The chain crosses the membrane as a helical span at residues 726-746 (AVGLAHYLLGGIGTTWAFFLA).

It belongs to the PsaA/PsaB family. In terms of assembly, the PsaA/B heterodimer binds the P700 chlorophyll special pair and subsequent electron acceptors. PSI consists of a core antenna complex that captures photons, and an electron transfer chain that converts photonic excitation into a charge separation. The eukaryotic PSI reaction center is composed of at least 11 subunits. P700 is a chlorophyll a/chlorophyll a' dimer, A0 is one or more chlorophyll a, A1 is one or both phylloquinones and FX is a shared 4Fe-4S iron-sulfur center. is required as a cofactor.

It is found in the plastid. Its subcellular location is the chloroplast thylakoid membrane. The enzyme catalyses reduced [plastocyanin] + hnu + oxidized [2Fe-2S]-[ferredoxin] = oxidized [plastocyanin] + reduced [2Fe-2S]-[ferredoxin]. In terms of biological role, psaA and PsaB bind P700, the primary electron donor of photosystem I (PSI), as well as the electron acceptors A0, A1 and FX. PSI is a plastocyanin/cytochrome c6-ferredoxin oxidoreductase, converting photonic excitation into a charge separation, which transfers an electron from the donor P700 chlorophyll pair to the spectroscopically characterized acceptors A0, A1, FX, FA and FB in turn. Oxidized P700 is reduced on the lumenal side of the thylakoid membrane by plastocyanin or cytochrome c6. The protein is Photosystem I P700 chlorophyll a apoprotein A1 of Phaeodactylum tricornutum (strain CCAP 1055/1).